The sequence spans 274 residues: 3-methyl-2-oxobutanoate hydroxymethyltransferase (274 aa).

Mg(2+) is bound by residues Asp-46 and Asp-85. Residues 46–47 (DS), Asp-85, and Lys-115 contribute to the 3-methyl-2-oxobutanoate site. Glu-117 lines the Mg(2+) pocket. Catalysis depends on Glu-184, which acts as the Proton acceptor.

This sequence belongs to the PanB family. Homodecamer; pentamer of dimers. Requires Mg(2+) as cofactor.

The protein resides in the cytoplasm. The catalysed reaction is 3-methyl-2-oxobutanoate + (6R)-5,10-methylene-5,6,7,8-tetrahydrofolate + H2O = 2-dehydropantoate + (6S)-5,6,7,8-tetrahydrofolate. Its pathway is cofactor biosynthesis; (R)-pantothenate biosynthesis; (R)-pantoate from 3-methyl-2-oxobutanoate: step 1/2. Functionally, catalyzes the reversible reaction in which hydroxymethyl group from 5,10-methylenetetrahydrofolate is transferred onto alpha-ketoisovalerate to form ketopantoate. The polypeptide is 3-methyl-2-oxobutanoate hydroxymethyltransferase (Thermoanaerobacter pseudethanolicus (strain ATCC 33223 / 39E) (Clostridium thermohydrosulfuricum)).